Here is a 130-residue protein sequence, read N- to C-terminus: Large ribosomal subunit protein bL31c (130 aa).

The transit peptide at 1–36 directs the protein to the chloroplast; the sequence is MVLTLSNQFLAKIPATPKTLTLPKTSSSTLRPQWSC.

This sequence belongs to the bacterial ribosomal protein bL31 family. Type A subfamily. In terms of assembly, component of the chloroplast large ribosomal subunit (LSU). Mature 70S chloroplast ribosomes of higher plants consist of a small (30S) and a large (50S) subunit. The 30S small subunit contains 1 molecule of ribosomal RNA (16S rRNA) and 24 different proteins. The 50S large subunit contains 3 rRNA molecules (23S, 5S and 4.5S rRNA) and 33 different proteins.

The protein resides in the plastid. The protein localises to the chloroplast. Its function is as follows. Component of the chloroplast ribosome (chloro-ribosome), a dedicated translation machinery responsible for the synthesis of chloroplast genome-encoded proteins, including proteins of the transcription and translation machinery and components of the photosynthetic apparatus. In Spinacia oleracea (Spinach), this protein is Large ribosomal subunit protein bL31c (RPL31).